Consider the following 431-residue polypeptide: SPI-1 type 3 secretion system ATPase (431 aa).

Residue G162–M167 coordinates ATP.

The protein belongs to the ATPase alpha/beta chains family. T3SS ATPase subfamily. As to quaternary structure, the core secretion machinery of the T3SS is composed of approximately 20 different proteins, including cytoplasmic components, a base, an export apparatus and a needle. This subunit is part of the cytosolic complex. Forms homohexamers.

It is found in the cytoplasm. It catalyses the reaction ATP + H2O + cellular proteinSide 1 = ADP + phosphate + cellular proteinSide 2.. Functionally, ATPase component of the type III secretion system (T3SS), also called injectisome, which is used to inject bacterial effector proteins into eukaryotic host cells. Acts as a molecular motor to provide the energy that is required for the export of proteins. Required for type III secretion apparatus (T3SA) formation, proper protein secretion, host cell invasion and virulence. May play a critical role in T3SS substrate recognition, disassembly of the effector/chaperone complex and unfolding of the effector in an ATP-dependent manner prior to secretion. The protein is SPI-1 type 3 secretion system ATPase of Salmonella typhi.